The following is a 200-amino-acid chain: Lipopolysaccharide core heptose(II)-phosphate phosphatase (200 aa).

The N-terminal stretch at 1 to 25 (MLAFCRSSLKSKKYFIILLALAAIA) is a signal peptide.

It belongs to the phosphoglycerate mutase family. Ais subfamily.

Its subcellular location is the periplasm. It participates in bacterial outer membrane biogenesis; lipopolysaccharide metabolism. In terms of biological role, catalyzes the dephosphorylation of heptose(II) of the outer membrane lipopolysaccharide core. In Escherichia coli O6:K15:H31 (strain 536 / UPEC), this protein is Lipopolysaccharide core heptose(II)-phosphate phosphatase.